Reading from the N-terminus, the 404-residue chain is Pyrophosphate--fructose 6-phosphate 1-phosphotransferase (404 aa).

G12 is a diphosphate binding site. Mg(2+) is bound at residue D121. Residues T149–D151, M194–R196, E266, and Y323–R326 each bind substrate. The active-site Proton acceptor is D151.

This sequence belongs to the phosphofructokinase type A (PFKA) family. PPi-dependent PFK group II subfamily. Clade 'P' sub-subfamily. Homodimer. Mg(2+) serves as cofactor.

It is found in the cytoplasm. The catalysed reaction is beta-D-fructose 6-phosphate + diphosphate = beta-D-fructose 1,6-bisphosphate + phosphate + H(+). The protein operates within carbohydrate degradation; glycolysis; D-glyceraldehyde 3-phosphate and glycerone phosphate from D-glucose: step 3/4. With respect to regulation, non-allosteric. Catalyzes the phosphorylation of D-fructose 6-phosphate, the first committing step of glycolysis. Uses inorganic phosphate (PPi) as phosphoryl donor instead of ATP like common ATP-dependent phosphofructokinases (ATP-PFKs), which renders the reaction reversible, and can thus function both in glycolysis and gluconeogenesis. Consistently, PPi-PFK can replace the enzymes of both the forward (ATP-PFK) and reverse (fructose-bisphosphatase (FBPase)) reactions. This Propionibacterium freudenreichii subsp. shermanii (strain ATCC 9614 / DSM 4902 / CIP 103027 / NCIMB 8099 / CIRM-BIA1) protein is Pyrophosphate--fructose 6-phosphate 1-phosphotransferase.